Consider the following 190-residue polypeptide: Cancer-related nucleoside-triphosphatase homolog (190 aa).

ATP-binding positions include 9 to 16 and 109 to 116; these read GPPGVGKT and VCIIDEIG. Position 165 is an N6-acetyllysine (Lys165).

This sequence belongs to the THEP1 NTPase family. As to quaternary structure, monomer.

It catalyses the reaction a ribonucleoside 5'-triphosphate + H2O = a ribonucleoside 5'-diphosphate + phosphate + H(+). The enzyme catalyses 5-methyl-UTP + H2O = 5-methyl-UDP + phosphate + H(+). It carries out the reaction CTP + H2O = CDP + phosphate + H(+). The catalysed reaction is ATP + H2O = ADP + phosphate + H(+). It catalyses the reaction GTP + H2O = GDP + phosphate + H(+). Has nucleotide phosphatase activity towards ATP, GTP, CTP, TTP and UTP. Hydrolyzes nucleoside diphosphates with lower efficiency. The sequence is that of Cancer-related nucleoside-triphosphatase homolog from Mus musculus (Mouse).